The chain runs to 713 residues: NAD(+) hydrolase SARM1 (713 aa).

One copy of the ARM 1 repeat lies at 53–96; sequence DVQAVLDGSLPALRSAIRTLRSSKDTGDLEETRRAIAETFQLVE. NAD(+)-binding positions include tryptophan 99, arginine 106, 145-153, and 186-189; these read EQILVSENR and HMFK. ARM repeat units lie at residues 110–149, 151–189, 192–231, 233–276, 277–310, 311–350, and 355–398; these read EEIC…QILV, ENRD…HMFK, EETS…NCAM, GGHR…LAAN, REME…NMLD, SADS…VETS, and QRNT…EEVP. 2 SAM domains span residues 408–472 and 478–537; these read WKSG…LKTY and CDPN…ILSA. Positions 552-695 constitute a TIR domain; the sequence is KGPDVFISYR…KILRFLEGCP (144 aa). NAD(+) is bound by residues 561–562 and glutamate 591; that span reads RR. Glutamate 634 is an active-site residue.

Belongs to the SARM1 family. Homooctamer; forms an octameric ring via SAM domains.

It localises to the cytoplasm. The protein resides in the cell projection. It is found in the axon. Its subcellular location is the dendrite. The protein localises to the synapse. It localises to the mitochondrion. The enzyme catalyses NAD(+) + H2O = ADP-D-ribose + nicotinamide + H(+). The catalysed reaction is NAD(+) = cyclic ADP-beta-D-ribose + nicotinamide + H(+). It catalyses the reaction NADP(+) + H2O = ADP-D-ribose 2'-phosphate + nicotinamide + H(+). Its activity is regulated as follows. Autoinhibited: in the inactive state, the enzymatic TIR domain is held apart by the autoinhibiting ARM repeats. NAD(+)-binding to ARM repeats maintains an inactive state by promoting interaction between ARM repeats and the TIR domain, thereby facilitating inhibition of the enzymatic TIR domain. Following activation, possibly by nicotinamide mononucleotide (NMN), auto-inhibitory interactions are released, allowing self-association of the TIR domains and subsequent activation of the NAD(+) hydrolase (NADase) activity. Self-association of TIR domains is facilitated by the octamer of SAM domains. Functionally, NAD(+) hydrolase, which plays a key role in axonal degeneration following injury by regulating NAD(+) metabolism. Acts as a negative regulator of MYD88- and TRIF-dependent toll-like receptor signaling pathway by promoting Wallerian degeneration, an injury-induced form of programmed subcellular death which involves degeneration of an axon distal to the injury site. Wallerian degeneration is triggerred by NAD(+) depletion: in response to injury, SARM1 is activated and catalyzes cleavage of NAD(+) into ADP-D-ribose (ADPR), cyclic ADPR (cADPR) and nicotinamide; NAD(+) cleavage promoting cytoskeletal degradation and axon destruction. Also able to hydrolyze NADP(+), but not other NAD(+)-related molecules. Can activate neuronal cell death in response to stress. This is NAD(+) hydrolase SARM1 from Danio rerio (Zebrafish).